We begin with the raw amino-acid sequence, 311 residues long: Aspartate carbamoyltransferase catalytic subunit (311 aa).

Residues arginine 59 and threonine 60 each coordinate carbamoyl phosphate. Residue lysine 87 participates in L-aspartate binding. Carbamoyl phosphate-binding residues include arginine 109, histidine 139, and glutamine 142. The L-aspartate site is built by arginine 172 and arginine 224. Residues alanine 265 and proline 266 each contribute to the carbamoyl phosphate site.

This sequence belongs to the aspartate/ornithine carbamoyltransferase superfamily. ATCase family. As to quaternary structure, heterododecamer (2C3:3R2) of six catalytic PyrB chains organized as two trimers (C3), and six regulatory PyrI chains organized as three dimers (R2).

The enzyme catalyses carbamoyl phosphate + L-aspartate = N-carbamoyl-L-aspartate + phosphate + H(+). It functions in the pathway pyrimidine metabolism; UMP biosynthesis via de novo pathway; (S)-dihydroorotate from bicarbonate: step 2/3. Its function is as follows. Catalyzes the condensation of carbamoyl phosphate and aspartate to form carbamoyl aspartate and inorganic phosphate, the committed step in the de novo pyrimidine nucleotide biosynthesis pathway. In Streptococcus equi subsp. zooepidemicus (strain MGCS10565), this protein is Aspartate carbamoyltransferase catalytic subunit.